The primary structure comprises 469 residues: Ribulose bisphosphate carboxylase large chain (469 aa).

Lys-5 bears the N6,N6,N6-trimethyllysine mark. Asn-114 and Thr-164 together coordinate substrate. The active-site Proton acceptor is the Lys-166. A substrate-binding site is contributed by Lys-168. Positions 192, 194, and 195 each coordinate Mg(2+). The residue at position 192 (Lys-192) is an N6-carboxylysine. His-285 acts as the Proton acceptor in catalysis. Positions 286, 318, and 370 each coordinate substrate.

This sequence belongs to the RuBisCO large chain family. Type I subfamily. As to quaternary structure, heterohexadecamer of 8 large chains and 8 small chains; disulfide-linked. The disulfide link is formed within the large subunit homodimers. Requires Mg(2+) as cofactor. The disulfide bond which can form in the large chain dimeric partners within the hexadecamer appears to be associated with oxidative stress and protein turnover.

It localises to the plastid. Its subcellular location is the chloroplast. The catalysed reaction is 2 (2R)-3-phosphoglycerate + 2 H(+) = D-ribulose 1,5-bisphosphate + CO2 + H2O. It carries out the reaction D-ribulose 1,5-bisphosphate + O2 = 2-phosphoglycolate + (2R)-3-phosphoglycerate + 2 H(+). Its function is as follows. RuBisCO catalyzes two reactions: the carboxylation of D-ribulose 1,5-bisphosphate, the primary event in carbon dioxide fixation, as well as the oxidative fragmentation of the pentose substrate in the photorespiration process. Both reactions occur simultaneously and in competition at the same active site. The chain is Ribulose bisphosphate carboxylase large chain from Cephalanthus occidentalis (Common buttonbush).